A 170-amino-acid chain; its full sequence is Translocon-associated protein subunit gamma (170 aa).

The Lumenal portion of the chain corresponds to 1-24 (MAEVDEFSAFRHENDVSIEQRIVY). Residues 25 to 45 (FINSLIVALVPVYLYHAIFFM) traverse the membrane as a helical segment. At 46-51 (SIDDHM) the chain is on the cytoplasmic side. A helical transmembrane segment spans residues 52 to 72 (IIYGSVTLFAAIVLTFAYNNI). Topologically, residues 73–121 (YRMKRLKLSASREHISIASKNKVGDKKKFAAAQKEVQALVTSHEAIAAS) are lumenal. The chain crosses the membrane as a helical span at residues 122–141 (IMYNNAVFLICVSIFSFIIF). At 142–145 (KNVP) the chain is on the cytoplasmic side. A helical transmembrane segment spans residues 146–168 (LVYNYIISISLGAGLTSFLSTSS).

It belongs to the TRAP-gamma family. As to quaternary structure, heterotrimer of TRAP-alpha, TRAP-beta and TRAP-gamma.

It localises to the endoplasmic reticulum membrane. TRAP proteins are part of a complex whose function is to bind calcium to the ER membrane and thereby regulate the retention of ER resident proteins. The sequence is that of Translocon-associated protein subunit gamma (ssr3) from Dictyostelium discoideum (Social amoeba).